Here is a 484-residue protein sequence, read N- to C-terminus: tRNA sulfurtransferase (484 aa).

One can recognise a THUMP domain in the interval 63-167; it reads QAFGERLACI…GDKLYMVTKR (105 aa). Residues 185–186, Lys-267, Gly-289, and Gln-298 each bind ATP; that span reads LI. Cysteines 346 and 458 form a disulfide. The Rhodanese domain occupies 406–484; the sequence is IDTNEVVIDI…GYHNVKVYRP (79 aa). Cys-458 (cysteine persulfide intermediate) is an active-site residue.

It belongs to the ThiI family.

The protein localises to the cytoplasm. It carries out the reaction [ThiI sulfur-carrier protein]-S-sulfanyl-L-cysteine + a uridine in tRNA + 2 reduced [2Fe-2S]-[ferredoxin] + ATP + H(+) = [ThiI sulfur-carrier protein]-L-cysteine + a 4-thiouridine in tRNA + 2 oxidized [2Fe-2S]-[ferredoxin] + AMP + diphosphate. The catalysed reaction is [ThiS sulfur-carrier protein]-C-terminal Gly-Gly-AMP + S-sulfanyl-L-cysteinyl-[cysteine desulfurase] + AH2 = [ThiS sulfur-carrier protein]-C-terminal-Gly-aminoethanethioate + L-cysteinyl-[cysteine desulfurase] + A + AMP + 2 H(+). Its pathway is cofactor biosynthesis; thiamine diphosphate biosynthesis. Functionally, catalyzes the ATP-dependent transfer of a sulfur to tRNA to produce 4-thiouridine in position 8 of tRNAs, which functions as a near-UV photosensor. Also catalyzes the transfer of sulfur to the sulfur carrier protein ThiS, forming ThiS-thiocarboxylate. This is a step in the synthesis of thiazole, in the thiamine biosynthesis pathway. The sulfur is donated as persulfide by IscS. The polypeptide is tRNA sulfurtransferase (Shewanella sp. (strain MR-7)).